The sequence spans 604 residues: Probable translation initiation factor IF-2 (604 aa).

Positions 18–232 (IRTPIVCVLG…VLIGLAQRYM (215 aa)) constitute a tr-type G domain. Positions 27–34 (GHVDHGKT) are G1. 27-34 (GHVDHGKT) lines the GTP pocket. The segment at 52–56 (AITQH) is G2. The segment at 88 to 91 (DTPG) is G3. GTP contacts are provided by residues 88-92 (DTPGH) and 142-145 (TKLD). A G4 region spans residues 142–145 (TKLD). The G5 stretch occupies residues 210-212 (SAH).

This sequence belongs to the TRAFAC class translation factor GTPase superfamily. Classic translation factor GTPase family. IF-2 subfamily.

Function in general translation initiation by promoting the binding of the formylmethionine-tRNA to ribosomes. Seems to function along with eIF-2. The sequence is that of Probable translation initiation factor IF-2 from Methanospirillum hungatei JF-1 (strain ATCC 27890 / DSM 864 / NBRC 100397 / JF-1).